Consider the following 38-residue polypeptide: Large ribosomal subunit protein bL36A (38 aa).

Belongs to the bacterial ribosomal protein bL36 family.

The protein is Large ribosomal subunit protein bL36A of Cronobacter sakazakii (strain ATCC BAA-894) (Enterobacter sakazakii).